A 317-amino-acid polypeptide reads, in one-letter code: D-alanine--D-alanine ligase (317 aa).

The 197-residue stretch at 103–299 (KHIFRSLNID…FNELVKIIIE (197 aa)) folds into the ATP-grasp domain. 130–183 (KIDYPYVLKPINEGSSIGVYIIFSHEDYLELKDNSSTIMEKMIVEEYIPGIELH) is an ATP binding site. Positions 251, 265, and 267 each coordinate Mg(2+).

The protein belongs to the D-alanine--D-alanine ligase family. Mg(2+) is required as a cofactor. The cofactor is Mn(2+).

It is found in the cytoplasm. The enzyme catalyses 2 D-alanine + ATP = D-alanyl-D-alanine + ADP + phosphate + H(+). The protein operates within cell wall biogenesis; peptidoglycan biosynthesis. In terms of biological role, cell wall formation. This chain is D-alanine--D-alanine ligase, found in Wolbachia sp. subsp. Drosophila simulans (strain wRi).